A 302-amino-acid polypeptide reads, in one-letter code: 4-hydroxy-tetrahydrodipicolinate synthase (302 aa).

T55 provides a ligand contact to pyruvate. Y144 functions as the Proton donor/acceptor in the catalytic mechanism. The active-site Schiff-base intermediate with substrate is K172. A pyruvate-binding site is contributed by V214.

It belongs to the DapA family. In terms of assembly, homotetramer; dimer of dimers.

Its subcellular location is the cytoplasm. The enzyme catalyses L-aspartate 4-semialdehyde + pyruvate = (2S,4S)-4-hydroxy-2,3,4,5-tetrahydrodipicolinate + H2O + H(+). Its pathway is amino-acid biosynthesis; L-lysine biosynthesis via DAP pathway; (S)-tetrahydrodipicolinate from L-aspartate: step 3/4. In terms of biological role, catalyzes the condensation of (S)-aspartate-beta-semialdehyde [(S)-ASA] and pyruvate to 4-hydroxy-tetrahydrodipicolinate (HTPA). This is 4-hydroxy-tetrahydrodipicolinate synthase from Prochlorococcus marinus (strain SARG / CCMP1375 / SS120).